A 278-amino-acid polypeptide reads, in one-letter code: 4-deoxy-L-threo-5-hexosulose-uronate ketol-isomerase (278 aa).

Zn(2+) contacts are provided by His-196, His-198, Glu-203, and His-245.

It belongs to the KduI family. The cofactor is Zn(2+).

It catalyses the reaction 5-dehydro-4-deoxy-D-glucuronate = 3-deoxy-D-glycero-2,5-hexodiulosonate. The protein operates within glycan metabolism; pectin degradation; 2-dehydro-3-deoxy-D-gluconate from pectin: step 4/5. Functionally, catalyzes the isomerization of 5-dehydro-4-deoxy-D-glucuronate to 3-deoxy-D-glycero-2,5-hexodiulosonate. The protein is 4-deoxy-L-threo-5-hexosulose-uronate ketol-isomerase of Salmonella typhimurium (strain LT2 / SGSC1412 / ATCC 700720).